The sequence spans 82 residues: ATP synthase subunit c, chloroplastic (82 aa).

Transmembrane regions (helical) follow at residues 7 to 27 (AASV…PGIG) and 57 to 77 (LAFM…LLFA).

It belongs to the ATPase C chain family. In terms of assembly, F-type ATPases have 2 components, F(1) - the catalytic core - and F(0) - the membrane proton channel. F(1) has five subunits: alpha(3), beta(3), gamma(1), delta(1), epsilon(1). F(0) has four main subunits: a(1), b(1), b'(1) and c(10-14). The alpha and beta chains form an alternating ring which encloses part of the gamma chain. F(1) is attached to F(0) by a central stalk formed by the gamma and epsilon chains, while a peripheral stalk is formed by the delta, b and b' chains.

It localises to the plastid. It is found in the chloroplast thylakoid membrane. F(1)F(0) ATP synthase produces ATP from ADP in the presence of a proton or sodium gradient. F-type ATPases consist of two structural domains, F(1) containing the extramembraneous catalytic core and F(0) containing the membrane proton channel, linked together by a central stalk and a peripheral stalk. During catalysis, ATP synthesis in the catalytic domain of F(1) is coupled via a rotary mechanism of the central stalk subunits to proton translocation. Functionally, key component of the F(0) channel; it plays a direct role in translocation across the membrane. A homomeric c-ring of between 10-14 subunits forms the central stalk rotor element with the F(1) delta and epsilon subunits. This is ATP synthase subunit c, chloroplastic from Guillardia theta (Cryptophyte).